The chain runs to 1068 residues: Huntingtin-interacting protein 1-related protein (1068 aa).

M1 carries the post-translational modification N-acetylmethionine. An ENTH domain is found at 23 to 151 (EREQFDKTQA…SFHLKHPQFP (129 aa)). The stretch at 347 to 599 (SVKDDRDLQI…RSSQEQGELQ (253 aa)) forms a coiled coil. Disordered regions lie at residues 424–443 (LEGERSQGLREEAERKASAT), 529–549 (ARAQEALSHTEQSKSELSSRL), and 582–608 (AALSREQQRSSQEQGELQGRLAERESQ). Composition is skewed to basic and acidic residues over residues 425–443 (EGERSQGLREEAERKASAT) and 539–549 (EQSKSELSSRL). Low complexity predominate over residues 590–600 (RSSQEQGELQG). The region spanning 771-1012 (SLDVRQEELG…ELRKQHYVLA (242 aa)) is the I/LWEQ domain. The important for actin binding stretch occupies residues 867-924 (RWTEGLISASKAVGWGATQLVEAADKVVLHTGKYEELIVCSHEIAASTAQLVAASKVK). The segment at 1016 to 1060 (GSPGEEVAIRPSTAPRSVTTKKPPLAQKPSVAPRQDHQLDKKDGI) is disordered. Phosphoserine is present on S1017. The span at 1049–1059 (RQDHQLDKKDG) shows a compositional bias: basic and acidic residues.

This sequence belongs to the SLA2 family. Homodimer. Interacts with actin; homodimerization promotes actin binding. Interacts with CLTB. Interacts with HIP1. Interacts (via ENTH and I/LWEQ domains) with BCL2L10. As to expression, brain, heart, kidney, pancreas, and liver, but not in lung or placenta.

The protein resides in the cytoplasm. It is found in the perinuclear region. Its subcellular location is the endomembrane system. The protein localises to the cytoplasmic vesicle. It localises to the clathrin-coated vesicle membrane. Component of clathrin-coated pits and vesicles, that may link the endocytic machinery to the actin cytoskeleton. Binds 3-phosphoinositides (via ENTH domain). May act through the ENTH domain to promote cell survival by stabilizing receptor tyrosine kinases following ligand-induced endocytosis. The sequence is that of Huntingtin-interacting protein 1-related protein (HIP1R) from Homo sapiens (Human).